A 78-amino-acid chain; its full sequence is UPF0335 protein RBE_1185 (78 aa).

It belongs to the UPF0335 family.

This chain is UPF0335 protein RBE_1185, found in Rickettsia bellii (strain RML369-C).